A 753-amino-acid polypeptide reads, in one-letter code: 5-methyltetrahydropteroyltriglutamate--homocysteine methyltransferase (753 aa).

5-methyltetrahydropteroyltri-L-glutamate-binding positions include 17 to 20 (RELK) and K117. Residues 431-433 (IGS) and E484 each bind L-homocysteine. Residues 431–433 (IGS) and E484 each bind L-methionine. Residues 515-516 (RC) and W561 contribute to the 5-methyltetrahydropteroyltri-L-glutamate site. Position 599 (D599) interacts with L-homocysteine. D599 contributes to the L-methionine binding site. E605 serves as a coordination point for 5-methyltetrahydropteroyltri-L-glutamate. Zn(2+) is bound by residues H641, C643, and E665. H694 serves as the catalytic Proton donor. Residue C726 coordinates Zn(2+).

Belongs to the vitamin-B12 independent methionine synthase family. The cofactor is Zn(2+).

The enzyme catalyses 5-methyltetrahydropteroyltri-L-glutamate + L-homocysteine = tetrahydropteroyltri-L-glutamate + L-methionine. Its pathway is amino-acid biosynthesis; L-methionine biosynthesis via de novo pathway; L-methionine from L-homocysteine (MetE route): step 1/1. Catalyzes the transfer of a methyl group from 5-methyltetrahydrofolate to homocysteine resulting in methionine formation. The sequence is that of 5-methyltetrahydropteroyltriglutamate--homocysteine methyltransferase from Klebsiella pneumoniae (strain 342).